The chain runs to 339 residues: Fructose-1,6-bisphosphatase class 1 (339 aa).

E101, D120, L122, and D123 together coordinate Mg(2+). Residues 123–126 (DGSS), N215, and K281 contribute to the substrate site. E287 is a binding site for Mg(2+).

This sequence belongs to the FBPase class 1 family. In terms of assembly, homotetramer. The cofactor is Mg(2+).

It is found in the cytoplasm. The catalysed reaction is beta-D-fructose 1,6-bisphosphate + H2O = beta-D-fructose 6-phosphate + phosphate. The protein operates within carbohydrate biosynthesis; gluconeogenesis. This Polynucleobacter necessarius subsp. necessarius (strain STIR1) protein is Fructose-1,6-bisphosphatase class 1.